Reading from the N-terminus, the 94-residue chain is MSFESNEYFDGNVKSIAFQSATLPGTLGVMDIGEYTFDTNAYEFMTVVNGALTVKLPGATDWKTFNAGETFEVEANVSFDVKVKVQTAYLCLYK.

The protein belongs to the nucleoside phosphorylase PpnP family.

The catalysed reaction is a purine D-ribonucleoside + phosphate = a purine nucleobase + alpha-D-ribose 1-phosphate. It catalyses the reaction adenosine + phosphate = alpha-D-ribose 1-phosphate + adenine. The enzyme catalyses cytidine + phosphate = cytosine + alpha-D-ribose 1-phosphate. It carries out the reaction guanosine + phosphate = alpha-D-ribose 1-phosphate + guanine. The catalysed reaction is inosine + phosphate = alpha-D-ribose 1-phosphate + hypoxanthine. It catalyses the reaction thymidine + phosphate = 2-deoxy-alpha-D-ribose 1-phosphate + thymine. The enzyme catalyses uridine + phosphate = alpha-D-ribose 1-phosphate + uracil. It carries out the reaction xanthosine + phosphate = alpha-D-ribose 1-phosphate + xanthine. Catalyzes the phosphorolysis of diverse nucleosides, yielding D-ribose 1-phosphate and the respective free bases. Can use uridine, adenosine, guanosine, cytidine, thymidine, inosine and xanthosine as substrates. Also catalyzes the reverse reactions. The sequence is that of Pyrimidine/purine nucleoside phosphorylase from Psychromonas ingrahamii (strain DSM 17664 / CCUG 51855 / 37).